A 712-amino-acid chain; its full sequence is Ferric reductase transmembrane component 6 (712 aa).

Residues 1–17 form the signal peptide; sequence MHRTLLFLTWLISLTKA. Topologically, residues 18–167 are vacuolar; it reads FNIKLPHTEK…HAHAYNLDIS (150 aa). N-linked (GlcNAc...) asparagine glycans are attached at residues Asn-89, Asn-112, and Asn-124. A helical membrane pass occupies residues 168–188; it reads SVYGAYLTYYFVIVGIIAVFF. Topologically, residues 189–244 are cytoplasmic; it reads HMSHYNGLNRALFASRFVNYIRGHFVLPTFLVDKHANHFKFLNVEVFTGLMPNSLE. The chain crosses the membrane as a helical span at residues 245–265; it reads AWIIFGYTLANIIFLSISYII. Residues 266–287 lie on the Vacuolar side of the membrane; that stretch reads DPYNLIFNSHLSQFTRLLADRS. The 125-residue stretch at 287 to 411 folds into the Ferric oxidoreductase domain; sequence SGILAFTQFP…YCCWQHVKIF (125 aa). The helical transmembrane segment at 288–308 threads the bilayer; sequence GILAFTQFPLIIIFTARNSFL. Topologically, residues 309–328 are cytoplasmic; it reads EFLTGVKFNSFISFHKWIGR. Heme is bound by residues His-323 and His-337. Residues 329–349 traverse the membrane as a helical segment; the sequence is IMVLNATIHSLSYSLFAIINH. Residues 350–360 lie on the Vacuolar side of the membrane; it reads AFKISNKQLYW. The chain crosses the membrane as a helical span at residues 361–381; it reads KFGIASITVLCVLLVLSLGIV. The Cytoplasmic segment spans residues 382-387; that stretch reads RKRHYE. Residues 388–408 traverse the membrane as a helical segment; the sequence is FFLYTHIILALLFFYCCWQHV. Heme contacts are provided by His-393 and His-407. The Vacuolar segment spans residues 409–416; it reads KIFNGWKE. The FAD-binding FR-type domain occupies 412 to 546; sequence NGWKEWIVVS…EGPYGPSNLH (135 aa). A helical transmembrane segment spans residues 417–437; sequence WIVVSLLIWGLEKLFRIWNIL. The Cytoplasmic portion of the chain corresponds to 438–712; the sequence is QFRFPKATLI…IEYFEEYQCW (275 aa). 493 to 499 lines the FAD pocket; that stretch reads HPFTIID. NADP(+)-binding positions include 538–541 and 678–679; these read GPYG and CG.

The protein belongs to the ferric reductase (FRE) family. It depends on FAD as a cofactor.

Its subcellular location is the vacuole membrane. It carries out the reaction 2 a Fe(II)-siderophore + NADP(+) + H(+) = 2 a Fe(III)-siderophore + NADPH. Metalloreductase responsible for reducing vacuolar iron and copper prior to transport into the cytosol. Catalyzes the reduction of Fe(3+) to Fe(2+) and Cu(2+) to Cu(+), respectively, which can then be transported by the respective vacuolar efflux systems to the cytosol. The polypeptide is Ferric reductase transmembrane component 6 (FRE6) (Saccharomyces cerevisiae (strain ATCC 204508 / S288c) (Baker's yeast)).